Here is a 410-residue protein sequence, read N- to C-terminus: Probable serine/threonine-protein kinase PBL9 (410 aa).

Gly2 is lipidated: N-myristoyl glycine. Cys4 carries the S-palmitoyl cysteine lipid modification. The tract at residues 11–46 is disordered; sequence AESSGASTKYDAKDIGSLGSKASSVSVRPSPRTEGE. In terms of domain architecture, Protein kinase spans 68 to 352; sequence FRPDSVLGEG…MSEVVSHLEH (285 aa). ATP is bound by residues 74–82 and Lys106; that span reads LGEGGFGCV. Position 151 is a phosphotyrosine (Tyr151). The active-site Proton acceptor is the Asp203. Residues Ser207 and Ser237 each carry the phosphoserine modification. Phosphothreonine occurs at positions 238 and 243. A Phosphotyrosine modification is found at Tyr251.

It belongs to the protein kinase superfamily. Ser/Thr protein kinase family. In terms of assembly, interacts with the Xanthomonas campestris effector XopAC/AvrAC. Expressed in stomatal guard cells of leaves.

Its subcellular location is the cell membrane. It catalyses the reaction L-seryl-[protein] + ATP = O-phospho-L-seryl-[protein] + ADP + H(+). It carries out the reaction L-threonyl-[protein] + ATP = O-phospho-L-threonyl-[protein] + ADP + H(+). Possible bi-functional kinase. In vitro, it exhibits serine/threonine activity. In vivo, can phosphorylate tyrosine residues of limited substrates. May be involved in plant defense signaling. The chain is Probable serine/threonine-protein kinase PBL9 from Arabidopsis thaliana (Mouse-ear cress).